A 90-amino-acid chain; its full sequence is Defensin-like protein 193 (90 aa).

Residues 1 to 27 form the signal peptide; it reads MAMKSVSTLAVFAILFLVIVEMPEIKA. 4 disulfides stabilise this stretch: Cys32/Cys86, Cys45/Cys69, Cys54/Cys81, and Cys58/Cys83.

This sequence belongs to the DEFL family. Protease inhibitor I18 (RTI/MTI-2) subfamily.

Its subcellular location is the secreted. The sequence is that of Defensin-like protein 193 (ATTI2) from Arabidopsis thaliana (Mouse-ear cress).